The chain runs to 85 residues: uncharacterized protein (85 aa).

The protein belongs to the ycf76 family.

The protein localises to the plastid. It localises to the chloroplast. This is an uncharacterized protein from Oryza sativa subsp. japonica (Rice).